We begin with the raw amino-acid sequence, 343 residues long: Heat-inducible transcription repressor HrcA (343 aa).

The protein belongs to the HrcA family.

Its function is as follows. Negative regulator of class I heat shock genes (grpE-dnaK-dnaJ and groELS operons). Prevents heat-shock induction of these operons. The chain is Heat-inducible transcription repressor HrcA from Clostridium botulinum (strain Eklund 17B / Type B).